We begin with the raw amino-acid sequence, 212 residues long: Ribosomal RNA small subunit methyltransferase G (212 aa).

S-adenosyl-L-methionine-binding positions include Gly80, Leu85, 131–132 (AE), and Arg146.

Belongs to the methyltransferase superfamily. RNA methyltransferase RsmG family.

It localises to the cytoplasm. It carries out the reaction guanosine(527) in 16S rRNA + S-adenosyl-L-methionine = N(7)-methylguanosine(527) in 16S rRNA + S-adenosyl-L-homocysteine. Specifically methylates the N7 position of guanine in position 527 of 16S rRNA. In Xanthomonas campestris pv. campestris (strain 8004), this protein is Ribosomal RNA small subunit methyltransferase G.